We begin with the raw amino-acid sequence, 362 residues long: METIHVDLAERSYPISIGAELFCNPAHFSSVIPAKKRVVVISNVTVAPLYAQQIIDTLNTFECQVSLLELDDGEQYKNLDTFNQILTFLLEENHSRDVTIVALGGGVVGDVVGFASACYQRGVDFIQVPTTLLSQVDSSVGGKTAINHPLGKNMVGAFYQPKAVIIDINCLKTLPEREFAAGMAEVIKYGIIIDSDFFDWLDENMEKLYALDHDALVYAISRCCQIKADVVAKDEKESGVRALLNLGHTFGHAIEAEMGYGNWLHGEAVSAGTVMAAVTAQKEGLISQQEVDRICALLKKAKLPLKAPKEMTVEAFMKHMMRDKKVLSGKLRLVLPTSIGSSEVVTGVSERVLADVIEQCKA.

Residues 72–77, 106–110, 130–131, K143, K152, and 170–173 contribute to the NAD(+) site; these read DGEQYK, GVVGD, TT, and CLKT. Zn(2+) contacts are provided by E185, H248, and H265.

The protein belongs to the sugar phosphate cyclases superfamily. Dehydroquinate synthase family. The cofactor is Co(2+). Zn(2+) serves as cofactor. It depends on NAD(+) as a cofactor.

The protein localises to the cytoplasm. It catalyses the reaction 7-phospho-2-dehydro-3-deoxy-D-arabino-heptonate = 3-dehydroquinate + phosphate. Its pathway is metabolic intermediate biosynthesis; chorismate biosynthesis; chorismate from D-erythrose 4-phosphate and phosphoenolpyruvate: step 2/7. In terms of biological role, catalyzes the conversion of 3-deoxy-D-arabino-heptulosonate 7-phosphate (DAHP) to dehydroquinate (DHQ). This chain is 3-dehydroquinate synthase, found in Aliivibrio salmonicida (strain LFI1238) (Vibrio salmonicida (strain LFI1238)).